Reading from the N-terminus, the 317-residue chain is Melanocyte-stimulating hormone receptor (317 aa).

Residues 1-37 (MPVQGSQRRLLGSLNSTPTATPHLGLAANQTGARCLE) are Extracellular-facing. N29 is a glycosylation site (N-linked (GlcNAc...) asparagine). The helical transmembrane segment at 38-63 (VSVPDGLFLSLGLVSLVENVLVVTAI) threads the bilayer. Residues 64 to 72 (AKNRNLHSP) are Cytoplasmic-facing. A helical membrane pass occupies residues 73 to 93 (MYCFICCLALSDLLVSGSNML). At 94 to 118 (ETAVTLLLEAGALAARAAVVQQLDN) the chain is on the extracellular side. The helical transmembrane segment at 119–140 (VIDVITCSSMLSSLCFLGAIAV) threads the bilayer. Residues 141–163 (DRYISIFYALRYHSIVTLPRARR) lie on the Cytoplasmic side of the membrane. The helical transmembrane segment at 164-183 (AVAAIWVASVLFSTLFIAYY) threads the bilayer. At 184–191 (DHAAVLLC) the chain is on the extracellular side. A helical transmembrane segment spans residues 192–211 (LVIFFLAMLVLMAVLYVHML). Topologically, residues 212 to 240 (ARACQHAQGIARLHKRQRLAHQGFGLKGA) are cytoplasmic. A helical transmembrane segment spans residues 241–266 (ATLTILLGIFFLCWGPFFLHLTLIVL). The Extracellular portion of the chain corresponds to 267 to 279 (CPQHPTCSCIFKN). The chain crosses the membrane as a helical span at residues 280–300 (FNLFLALIICNAIIDPLIYAF). Residues 301–317 (RSQELRRTLKEVLLCSW) lie on the Cytoplasmic side of the membrane. Residue C315 is the site of S-palmitoyl cysteine attachment.

Belongs to the G-protein coupled receptor 1 family. Interacts with MGRN1, but does not undergo MGRN1-mediated ubiquitination; this interaction competes with GNAS-binding and thus inhibits agonist-induced cAMP production. Interacts with OPN3; the interaction results in a decrease in MC1R-mediated cAMP signaling and ultimately a decrease in melanin production in melanocytes.

It localises to the cell membrane. In terms of biological role, receptor for MSH (alpha, beta and gamma) and ACTH. The activity of this receptor is mediated by G proteins which activate adenylate cyclase. Mediates melanogenesis, the production of eumelanin (black/brown) and phaeomelanin (red/yellow), via regulation of cAMP signaling in melanocytes. This chain is Melanocyte-stimulating hormone receptor (MC1R), found in Papio hamadryas (Hamadryas baboon).